Here is a 585-residue protein sequence, read N- to C-terminus: Optineurin (585 aa).

Residues methionine 1–leucine 32 form a disordered region. The span at serine 16 to serine 25 shows a compositional bias: polar residues. A coiled-coil region spans residues glutamate 38–serine 181. The interval methionine 58–methionine 220 is interaction with Rab8. The short motif at aspartate 187 to isoleucine 192 is the LIR element. Phosphoserine occurs at positions 188 and 209. Disordered regions lie at residues glutamate 200 to methionine 220 and phenylalanine 269 to valine 299. The stretch at cysteine 244–aspartate 512 forms a coiled coil. Serine 346 is modified (phosphoserine). Residues threonine 415–isoleucine 585 are interaction with HD. The interval lysine 416–arginine 525 is interaction with MYO6. Residues aspartate 478 to arginine 483 carry the UBAN motif. Residue serine 531 is modified to Phosphoserine. A CCHC NOA-type zinc finger spans residues proline 555–isoleucine 585. Zn(2+) contacts are provided by cysteine 563, cysteine 566, histidine 579, and cysteine 583.

As to quaternary structure, self-associates. Interacts with HD. Interacts with GTF3A. Interacts with MYO6. Interacts (via UBAN) with ubiquitinated TFRC. Interacts with GTP-bound Rab8 (RAB8A and/or RAB8B). Interacts with TBC1D17. Interacts with TBK1. Interacts with TRAF3. Binds to linear ubiquitin chains. Interacts with LC3 family members MAP1LC3A, MAP1LC3B, GABARAP, GABARAPL1 and GABARAPL2; OPTN phosphorylation increases the association (at least with MAP1LC3B). Interacts with RAB12; the interaction may be indirect. Interacts with TBK1; this interaction leads to the Golgi localization of TBK1 and its subsequent activation. Interacts with palmitoyltransferase ZDHHC17/HIP14; the interaction does not lead to palmitoylation of OPTN. Interacts with CYLD. Interacts with TOM1; the interaction is indirect and is mediated by MYO6, which acts as a bridge between TOM1 and OPTN. Interacts with USP12; the interaction is independent of USP12 deubiquitinase activity and may be involved in regulation of autophagic flux. Post-translationally, phosphorylated by TBK1, leading to restrict bacterial proliferation in case of infection.

Its subcellular location is the cytoplasm. The protein localises to the perinuclear region. The protein resides in the golgi apparatus. It localises to the trans-Golgi network. It is found in the cytoplasmic vesicle. Its subcellular location is the autophagosome. The protein localises to the recycling endosome. In terms of biological role, plays an important role in the maintenance of the Golgi complex, in membrane trafficking, in exocytosis, through its interaction with myosin VI and Rab8. Links myosin VI to the Golgi complex and plays an important role in Golgi ribbon formation. Negatively regulates the induction of IFNB in response to RNA virus infection. Plays a neuroprotective role in the eye and optic nerve. Probably part of the TNF-alpha signaling pathway that can shift the equilibrium toward induction of cell death. May act by regulating membrane trafficking and cellular morphogenesis via a complex that contains Rab8 and huntingtin (HD). Mediates the interaction of Rab8 with the probable GTPase-activating protein TBC1D17 during Rab8-mediated endocytic trafficking, such as that of transferrin receptor (TFRC/TfR); regulates Rab8 recruitment to tubules emanating from the endocytic recycling compartment. Autophagy receptor that interacts directly with both the cargo to become degraded and an autophagy modifier of the MAP1 LC3 family; targets ubiquitin-coated bacteria (xenophagy) and appears to function in the same pathway as SQSTM1 and CALCOCO2/NDP52. The sequence is that of Optineurin (Optn) from Rattus norvegicus (Rat).